Reading from the N-terminus, the 354-residue chain is MSSAFRTVWWEAGQVCLIDQRLLPNETSVVRCTTVEEVARAIRTMQIRGAPAIGCAAAYGMALAAHHAASTATDGDHQQVYDQLAAAKTILDAQRPTAVNLSWATRRVQEKVRRLIPAAPNTLARAALEEAHAILAEDLAMCYAIGRHGVALIPPRGHVLTHCNAGGLATAGYGTALAPIRMAHEQGRPIHVYVDETRPFLQGARLTAWELLQERIPMTLITDTMAGHFMQRGAIDCVIVGADRIVANGDVANKIGTYSLAVLARAHGIPFYVAAPSSTIDLSLPNGEAIPIEERSPDEVTTCFGRRIAPEGAVAAHPAFDVTPSHLVTAIITECGVIYPPFEEPLRRVVAGSE.

Residues Arg-48–Ala-50, Arg-95, and Gln-202 each bind substrate. Asp-243 serves as the catalytic Proton donor. Asn-253–Lys-254 lines the substrate pocket.

Belongs to the eIF-2B alpha/beta/delta subunits family. MtnA subfamily.

The catalysed reaction is 5-(methylsulfanyl)-alpha-D-ribose 1-phosphate = 5-(methylsulfanyl)-D-ribulose 1-phosphate. It functions in the pathway amino-acid biosynthesis; L-methionine biosynthesis via salvage pathway; L-methionine from S-methyl-5-thio-alpha-D-ribose 1-phosphate: step 1/6. Functionally, catalyzes the interconversion of methylthioribose-1-phosphate (MTR-1-P) into methylthioribulose-1-phosphate (MTRu-1-P). This is Methylthioribose-1-phosphate isomerase from Roseiflexus castenholzii (strain DSM 13941 / HLO8).